Reading from the N-terminus, the 511-residue chain is Coatomer subunit delta (511 aa).

Over residues 168–177 the composition is skewed to basic and acidic residues; that stretch reads QARRDAERQG. The segment at 168–188 is disordered; sequence QARRDAERQGKKAPGFGGFGS. S223 is subject to Phosphoserine. An N6-acetyllysine mark is found at K233 and K241. The residue at position 244 (S244) is a Phosphoserine. Residues 271 to 511 form the MHD domain; it reads MESVHMKIEE…TFLVDKYEIL (241 aa). Residues K309 and K351 each carry the N6-acetyllysine modification. S493 bears the Phosphoserine mark.

Belongs to the adaptor complexes medium subunit family. Delta-COP subfamily. In terms of assembly, oligomeric complex that consists of at least the alpha, beta, beta', gamma, delta, epsilon and zeta subunits.

It localises to the cytoplasm. Its subcellular location is the golgi apparatus membrane. The protein localises to the cytoplasmic vesicle. The protein resides in the COPI-coated vesicle membrane. The coatomer is a cytosolic protein complex that binds to dilysine motifs and reversibly associates with Golgi non-clathrin-coated vesicles, which further mediate biosynthetic protein transport from the ER, via the Golgi up to the trans Golgi network. Coatomer complex is required for budding from Golgi membranes, and is essential for the retrograde Golgi-to-ER transport of dilysine-tagged proteins. In mammals, the coatomer can only be recruited by membranes associated to ADP-ribosylation factors (ARFs), which are small GTP-binding proteins; the complex also influences the Golgi structural integrity, as well as the processing, activity, and endocytic recycling of LDL receptors. The polypeptide is Coatomer subunit delta (Arcn1) (Rattus norvegicus (Rat)).